Here is a 706-residue protein sequence, read N- to C-terminus: Transcription factor 12 (706 aa).

The interval 25-109 (AMFSPPVNSG…TPFMNSNLIG (85 aa)) is disordered. Polar residues-rich tracts occupy residues 30 to 48 (PVNS…QFSG) and 56 to 76 (GTTS…SRGF). A phosphoserine mark is found at serine 47, serine 67, and serine 79. Residues 81 to 93 (HYSDHLNDSRLGT) show a composition bias toward basic and acidic residues. Serine 98 is modified (phosphoserine). Lysine 110 participates in a covalent cross-link: Glycyl lysine isopeptide (Lys-Gly) (interchain with G-Cter in SUMO2). Phosphoserine occurs at positions 116 and 124. Residues 119–140 (LYSRDSGLSGCQSSLLRQDLGL) form a leucine-zipper region. 2 disordered regions span residues 140–222 (LGSP…SMFA) and 249–313 (FGGI…ASHT). The span at 144-163 (AQLSSSGKPGTPYYSFSATS) shows a compositional bias: polar residues. Lysine 181 participates in a covalent cross-link: Glycyl lysine isopeptide (Lys-Gly) (interchain with G-Cter in SUMO2). Positions 181–188 (KKVRKVPP) match the Nuclear localization signal motif. Residues 256 to 269 (STSHMSQSSSYGSL) are compositionally biased toward low complexity. Positions 282–306 (VSPTDINTSLPPMSSFHRGSTSSSP) are enriched in polar residues. Residue threonine 313 is modified to Phosphothreonine. Position 333 is a phosphoserine (serine 333). 2 disordered regions span residues 349 to 392 (PDHT…YENS) and 520 to 604 (HKTP…ERRM). Low complexity predominate over residues 352–363 (TSSSFPSNPSTP). Composition is skewed to polar residues over residues 364–376 (VGSP…TSQW) and 383–392 (APSSPSYENS). Serine 392 is modified (phosphoserine). Composition is skewed to basic and acidic residues over residues 542–554 (IKTE…ENLH) and 560–575 (DDMK…DIKV). A Glycyl lysine isopeptide (Lys-Gly) (interchain with G-Cter in SUMO2) cross-link involves residue lysine 543. Serine 564 carries the phosphoserine modification. Lysine 574 is covalently cross-linked (Glycyl lysine isopeptide (Lys-Gly) (interchain with G-Cter in SUMO2)). The residue at position 581 (threonine 581) is a Phosphothreonine. Serine 582 and serine 583 each carry phosphoserine. Residues 592 to 604 (PEQKIEREKERRM) show a composition bias toward basic and acidic residues. The bHLH domain maps to 601–654 (ERRMANNARERLRVRDINEAFKELGRMCQLHLKSEKPQTKLLILHQAVAVILSL). Residues lysine 633 and lysine 677 each participate in a glycyl lysine isopeptide (Lys-Gly) (interchain with G-Cter in SUMO2) cross-link. Residues 656–679 (QQVRERNLNPKAACLKRREEEKVS) form a class A specific domain region. The interval 674–706 (EEEKVSAASAEPPNTLPGAHPGLSESTNPMGHL) is disordered. A compositionally biased stretch (polar residues) spans 697 to 706 (SESTNPMGHL).

Efficient DNA binding requires dimerization with another bHLH protein. Forms homo- or heterooligomers with myogenin, E12 and ITF2 proteins and RUNX1T1. Interacts with PTF1A. Interacts with NEUROD2. Interacts with BHLHA9. Widely expressed.

It is found in the nucleus. Its function is as follows. Transcriptional regulator. Involved in the initiation of neuronal differentiation. Activates transcription by binding to the E box (5'-CANNTG-3'). May be involved in the functional network that regulates the development of the GnRH axis. The chain is Transcription factor 12 (Tcf12) from Mus musculus (Mouse).